The chain runs to 273 residues: DNA repair protein RecO (273 aa).

The interval 249–273 is disordered; sequence GRSLTEEPELKAEQTEAEKESQRPR. A compositionally biased stretch (basic and acidic residues) spans 252–273; the sequence is LTEEPELKAEQTEAEKESQRPR.

Belongs to the RecO family.

Its function is as follows. Involved in DNA repair and RecF pathway recombination. The chain is DNA repair protein RecO from Heliobacterium modesticaldum (strain ATCC 51547 / Ice1).